The primary structure comprises 730 residues: MYSTNPGSWVTFDDDPAFQSSQKRKDFSLETQGVCRPNGLKLTLPTLRDPPSTPSSASSTPLSSPMVDFYFSPGPPSNSPLSTPTKDFPGFPGIPKAGTHVLYPIPECSSSSAPTTAGGVGPPLLLTKPDCSPHVSLPSSHSHTQPTPTLGFTEDAGPQRVQSEARQFEYFQDHCAFSNPFWKDEGSASPFPLDSLASRKPFSPKDKEVPIGHKSLTQCSLDYICEKLEHLHSAETQDPLGDLSMQDPYAGDTVSFVPHSLFRSQPRAGWSFMLRIPEKKNMMSSRQWGPIFLKVLPGGILQMYYEKGLEKPFKEFQLDPHCRLSEPKLENFSMAGKIHTVKVEHVSYSEKRKYHAKTEVVHEPEVEQMLKLGSTEHRDFLEFLTTVEEELIKLPATAKPKNKSYEEQEICLDIQDSLWGKVTKEGQLVESAVVTQICCLCFLNGPAECFLALNDRELQKRDECYFEKEPEKKGIAILDYHFHTCVKAEEFEQSRIIKFVPLDACRFELMRFKTSYEAGELPFAVKSVVTVQGAYVELQAFVNMTPAAQGSPHAGALRSCNNIMIHFPVPAQWIKALWTRNLQRQKSLKAKMNRRACLGSLQEPESEPVIQVTVGSAKYESAYRAVVWKIDRLPDKNSSPDQPHCLSYKLELGSDQEVPSDWYPFATVQFSMLEACASRTEVRSLGVESDAQPQKHVCQRACYNIQVEIEKKWIQVDGEDADKTGGCVTQ.

Disordered stretches follow at residues 1 to 26 (MYST…KRKD), 38 to 83 (NGLK…PLST), and 132 to 159 (SPHV…AGPQ). Low complexity-rich tracts occupy residues 54 to 65 (PSSASSTPLSSP) and 132 to 143 (SPHVSLPSSHSH). The region spanning 269 to 402 (GWSFMLRIPE…KLPATAKPKN (134 aa)) is the SHD domain. Positions 407–710 (EQEICLDIQD…ACYNIQVEIE (304 aa)) constitute an MHD domain.

The protein belongs to the Stoned B family.

It localises to the cytoplasm. The protein resides in the membrane. May be involved in the endocytic machinery. This chain is Stonin-1 (Ston1), found in Mus musculus (Mouse).